The chain runs to 158 residues: Cytochrome c-type biogenesis protein CcmE (158 aa).

Topologically, residues 1 to 8 are cytoplasmic; the sequence is MNIRRRRR. The helical; Signal-anchor for type II membrane protein transmembrane segment at 9–29 threads the bilayer; it reads LLVVVAILVGLGLATGLVMYA. Topologically, residues 30 to 158 are periplasmic; sequence LRSNIDLFYT…GLLNVSEPTR (129 aa). 2 residues coordinate heme: His130 and Tyr134.

It belongs to the CcmE/CycJ family.

It localises to the cell inner membrane. Heme chaperone required for the biogenesis of c-type cytochromes. Transiently binds heme delivered by CcmC and transfers the heme to apo-cytochromes in a process facilitated by CcmF and CcmH. The sequence is that of Cytochrome c-type biogenesis protein CcmE from Tatumella citrea (Pantoea citrea).